We begin with the raw amino-acid sequence, 191 residues long: Imidazoleglycerol-phosphate dehydratase (191 aa).

Belongs to the imidazoleglycerol-phosphate dehydratase family.

It localises to the cytoplasm. The catalysed reaction is D-erythro-1-(imidazol-4-yl)glycerol 3-phosphate = 3-(imidazol-4-yl)-2-oxopropyl phosphate + H2O. It functions in the pathway amino-acid biosynthesis; L-histidine biosynthesis; L-histidine from 5-phospho-alpha-D-ribose 1-diphosphate: step 6/9. This is Imidazoleglycerol-phosphate dehydratase from Methanosarcina mazei (strain ATCC BAA-159 / DSM 3647 / Goe1 / Go1 / JCM 11833 / OCM 88) (Methanosarcina frisia).